The following is a 330-amino-acid chain: DNA-directed RNA polymerase subunit alpha (330 aa).

The interval 1–229 is alpha N-terminal domain (alpha-NTD); it reads MKNIKFIKPF…DHFNVLVELS (229 aa). Residues 245-330 form an alpha C-terminal domain (alpha-CTD) region; sequence AHNSVLDLEI…HSVEEDKDKH (86 aa).

Belongs to the RNA polymerase alpha chain family. As to quaternary structure, homodimer. The RNAP catalytic core consists of 2 alpha, 1 beta, 1 beta' and 1 omega subunit. When a sigma factor is associated with the core the holoenzyme is formed, which can initiate transcription.

The enzyme catalyses RNA(n) + a ribonucleoside 5'-triphosphate = RNA(n+1) + diphosphate. In terms of biological role, DNA-dependent RNA polymerase catalyzes the transcription of DNA into RNA using the four ribonucleoside triphosphates as substrates. The protein is DNA-directed RNA polymerase subunit alpha of Onion yellows phytoplasma (strain OY-M).